The following is a 354-amino-acid chain: Uroporphyrinogen decarboxylase (354 aa).

Substrate contacts are provided by residues 27–31 (RQAGR), D77, Y154, T209, and H327.

Belongs to the uroporphyrinogen decarboxylase family. As to quaternary structure, homodimer.

It localises to the cytoplasm. It catalyses the reaction uroporphyrinogen III + 4 H(+) = coproporphyrinogen III + 4 CO2. It functions in the pathway porphyrin-containing compound metabolism; protoporphyrin-IX biosynthesis; coproporphyrinogen-III from 5-aminolevulinate: step 4/4. Catalyzes the decarboxylation of four acetate groups of uroporphyrinogen-III to yield coproporphyrinogen-III. This is Uroporphyrinogen decarboxylase from Escherichia fergusonii (strain ATCC 35469 / DSM 13698 / CCUG 18766 / IAM 14443 / JCM 21226 / LMG 7866 / NBRC 102419 / NCTC 12128 / CDC 0568-73).